Here is a 312-residue protein sequence, read N- to C-terminus: Protoheme IX farnesyltransferase (312 aa).

9 consecutive transmembrane segments (helical) span residues 31-51 (LLMK…GLFI), 58-78 (PLLS…AGAI), 107-127 (TALT…AICV), 130-150 (ISSI…TMWL), 157-177 (NIVI…SAVT), 184-204 (CLML…TLSL), 229-249 (YSIL…YFTD), 250-270 (IAGL…LCYA), and 286-306 (FKYS…EHCI).

Belongs to the UbiA prenyltransferase family. Protoheme IX farnesyltransferase subfamily.

It localises to the cell inner membrane. It carries out the reaction heme b + (2E,6E)-farnesyl diphosphate + H2O = Fe(II)-heme o + diphosphate. It participates in porphyrin-containing compound metabolism; heme O biosynthesis; heme O from protoheme: step 1/1. Its function is as follows. Converts heme B (protoheme IX) to heme O by substitution of the vinyl group on carbon 2 of heme B porphyrin ring with a hydroxyethyl farnesyl side group. The polypeptide is Protoheme IX farnesyltransferase (Orientia tsutsugamushi (strain Ikeda) (Rickettsia tsutsugamushi)).